The chain runs to 486 residues: Ribulose bisphosphate carboxylase large chain (486 aa).

The substrate site is built by asparagine 126 and threonine 176. The Proton acceptor role is filled by lysine 178. A substrate-binding site is contributed by lysine 180. Residues lysine 204, aspartate 206, and glutamate 207 each contribute to the Mg(2+) site. Lysine 204 bears the N6-carboxylysine mark. Catalysis depends on histidine 296, which acts as the Proton acceptor. Residues arginine 297, histidine 329, and serine 381 each contribute to the substrate site.

This sequence belongs to the RuBisCO large chain family. Type I subfamily. In terms of assembly, heterohexadecamer of 8 large chains and 8 small chains. The cofactor is Mg(2+).

It carries out the reaction 2 (2R)-3-phosphoglycerate + 2 H(+) = D-ribulose 1,5-bisphosphate + CO2 + H2O. The enzyme catalyses D-ribulose 1,5-bisphosphate + O2 = 2-phosphoglycolate + (2R)-3-phosphoglycerate + 2 H(+). RuBisCO catalyzes two reactions: the carboxylation of D-ribulose 1,5-bisphosphate, the primary event in carbon dioxide fixation, as well as the oxidative fragmentation of the pentose substrate. Both reactions occur simultaneously and in competition at the same active site. The sequence is that of Ribulose bisphosphate carboxylase large chain from Sinorhizobium medicae (strain WSM419) (Ensifer medicae).